The chain runs to 256 residues: CD209 antigen-like protein 2 (256 aa).

Over 1-50 (MSDSKEPRAQPLGLLEEEELITSSMNFFPRDFGFRQTRGYKSLAGCLGHA) the chain is Cytoplasmic. An Endocytosis signal motif is present at residues 14 to 15 (LL). The chain crosses the membrane as a helical; Signal-anchor for type II membrane protein span at residues 51-71 (PLVLPLLFFTLFTGLLVAILV). Topologically, residues 72–240 (QVSKNPSSQR…KSAASCSRDE (169 aa)) are extracellular. Disulfide bonds link C108–C119, C136–C229, and C208–C221. A C-type lectin domain is found at 114–230 (FFQGNCYFIS…CSAAKFWICK (117 aa)). Ca(2+) contacts are provided by E199, N201, I203, E206, N217, and D218.

In terms of tissue distribution, predominantly expressed in liver and axillary lymph nodes. At very low levels also found in other tissues.

The protein resides in the membrane. Functionally, probable pathogen-recognition receptor involved in peripheral immune surveillance in liver. May mediate the endocytosis of pathogens which are subsequently degraded in lysosomal compartments. Probably recognizes in a calcium-dependent manner high mannose N-linked oligosaccharides in a variety of pathogen antigens. Is a receptor for ICAM3, probably by binding to mannose-like carbohydrates. The chain is CD209 antigen-like protein 2 (CD209L2) from Macaca mulatta (Rhesus macaque).